The primary structure comprises 332 residues: DNA-directed RNA polymerase subunit alpha (332 aa).

Positions methionine 1–asparagine 226 are alpha N-terminal domain (alpha-NTD). Positions proline 245–glutamate 332 are alpha C-terminal domain (alpha-CTD).

Belongs to the RNA polymerase alpha chain family. In terms of assembly, homodimer. The RNAP catalytic core consists of 2 alpha, 1 beta, 1 beta' and 1 omega subunit. When a sigma factor is associated with the core the holoenzyme is formed, which can initiate transcription.

The catalysed reaction is RNA(n) + a ribonucleoside 5'-triphosphate = RNA(n+1) + diphosphate. In terms of biological role, DNA-dependent RNA polymerase catalyzes the transcription of DNA into RNA using the four ribonucleoside triphosphates as substrates. The protein is DNA-directed RNA polymerase subunit alpha of Bifidobacterium adolescentis (strain ATCC 15703 / DSM 20083 / NCTC 11814 / E194a).